A 122-amino-acid polypeptide reads, in one-letter code: Small ribosomal subunit protein uS13 (122 aa).

Residues 95–116 (GLPCRGQKTKTNARTRKGKKKT) are compositionally biased toward basic residues. Residues 95–122 (GLPCRGQKTKTNARTRKGKKKTVGAATK) are disordered.

Belongs to the universal ribosomal protein uS13 family. Part of the 30S ribosomal subunit. Forms a loose heterodimer with protein S19. Forms two bridges to the 50S subunit in the 70S ribosome.

Functionally, located at the top of the head of the 30S subunit, it contacts several helices of the 16S rRNA. In the 70S ribosome it contacts the 23S rRNA (bridge B1a) and protein L5 of the 50S subunit (bridge B1b), connecting the 2 subunits; these bridges are implicated in subunit movement. Contacts the tRNAs in the A and P-sites. The sequence is that of Small ribosomal subunit protein uS13 from Aliarcobacter butzleri (strain RM4018) (Arcobacter butzleri).